The primary structure comprises 974 residues: MMGSMLFRKRTLVTRANFLLFRSFSVNVEKLSDASAEIAGILKQENWRDTLVSSNLSIEINPEVVLSVLRSKRVDDPSKLLSFFNWVDSQKVTEQKLDSFSFLALDLCNFGSFEKALSVVERMIERNWPVAEVWSSIVRCSQEFVGKSDDGVLFGILFDGYIAKGYIEEAVFVFSSSMGLELVPRLSRCKVLLDALLRWNRLDLFWDVYKGMVERNVVFDVKTYHMLIIAHCRAGNVQLGKDVLFKTEKEFRTATLNVDGALKLKESMICKGLVPLKYTYDVLIDGLCKIKRLEDAKSLLVEMDSLGVSLDNHTYSLLIDGLLKGRNADAAKGLVHEMVSHGINIKPYMYDCCICVMSKEGVMEKAKALFDGMIASGLIPQAQAYASLIEGYCREKNVRQGYELLVEMKKRNIVISPYTYGTVVKGMCSSGDLDGAYNIVKEMIASGCRPNVVIYTTLIKTFLQNSRFGDAMRVLKEMKEQGIAPDIFCYNSLIIGLSKAKRMDEARSFLVEMVENGLKPNAFTYGAFISGYIEASEFASADKYVKEMRECGVLPNKVLCTGLINEYCKKGKVIEACSAYRSMVDQGILGDAKTYTVLMNGLFKNDKVDDAEEIFREMRGKGIAPDVFSYGVLINGFSKLGNMQKASSIFDEMVEEGLTPNVIIYNMLLGGFCRSGEIEKAKELLDEMSVKGLHPNAVTYCTIIDGYCKSGDLAEAFRLFDEMKLKGLVPDSFVYTTLVDGCCRLNDVERAITIFGTNKKGCASSTAPFNALINWVFKFGKTELKTEVLNRLMDGSFDRFGKPNDVTYNIMIDYLCKEGNLEAAKELFHQMQNANLMPTVITYTSLLNGYDKMGRRAEMFPVFDEAIAAGIEPDHIMYSVIINAFLKEGMTTKALVLVDQMFAKNAVDDGCKLSISTCRALLSGFAKVGEMEVAEKVMENMVRLQYIPDSATVIELINESCISSNQRVEADAVP.

A mitochondrion-targeting transit peptide spans 1–31 (MMGSMLFRKRTLVTRANFLLFRSFSVNVEKL). PPR repeat units follow at residues 96 to 130 (KLDSFSFLALDLCNFGSFEKALSVVERMIERNWPV), 150 to 184 (DGVLFGILFDGYIAKGYIEEAVFVFSSSMGLELVP), 185 to 219 (RLSRCKVLLDALLRWNRLDLFWDVYKGMVERNVVF), 220 to 250 (DVKTYHMLIIAHCRAGNVQLGKDVLFKTEKE), 257 to 275 (NVDGALKLKESMICKGLVP), 276 to 310 (LKYTYDVLIDGLCKIKRLEDAKSLLVEMDSLGVSL), 311 to 345 (DNHTYSLLIDGLLKGRNADAAKGLVHEMVSHGINI), 346 to 380 (KPYMYDCCICVMSKEGVMEKAKALFDGMIASGLIP), 381 to 415 (QAQAYASLIEGYCREKNVRQGYELLVEMKKRNIVI), 416 to 450 (SPYTYGTVVKGMCSSGDLDGAYNIVKEMIASGCRP), 451 to 485 (NVVIYTTLIKTFLQNSRFGDAMRVLKEMKEQGIAP), 486 to 520 (DIFCYNSLIIGLSKAKRMDEARSFLVEMVENGLKP), 521 to 555 (NAFTYGAFISGYIEASEFASADKYVKEMRECGVLP), 556 to 590 (NKVLCTGLINEYCKKGKVIEACSAYRSMVDQGILG), 591 to 625 (DAKTYTVLMNGLFKNDKVDDAEEIFREMRGKGIAP), 626 to 660 (DVFSYGVLINGFSKLGNMQKASSIFDEMVEEGLTP), 661 to 695 (NVIIYNMLLGGFCRSGEIEKAKELLDEMSVKGLHP), 696 to 730 (NAVTYCTIIDGYCKSGDLAEAFRLFDEMKLKGLVP), 731 to 761 (DSFVYTTLVDGCCRLNDVERAITIFGTNKKG), 765 to 799 (STAPFNALINWVFKFGKTELKTEVLNRLMDGSFDR), 804 to 838 (NDVTYNIMIDYLCKEGNLEAAKELFHQMQNANLMP), 839 to 873 (TVITYTSLLNGYDKMGRRAEMFPVFDEAIAAGIEP), 874 to 908 (DHIMYSVIINAFLKEGMTTKALVLVDQMFAKNAVD), and 914 to 948 (SISTCRALLSGFAKVGEMEVAEKVMENMVRLQYIP).

Belongs to the PPR family. P subfamily.

It is found in the mitochondrion. The sequence is that of Pentatricopeptide repeat-containing protein At5g61990, mitochondrial from Arabidopsis thaliana (Mouse-ear cress).